The chain runs to 487 residues: Probable cytosol aminopeptidase (487 aa).

Positions 253 and 258 each coordinate Mn(2+). K265 is a catalytic residue. Mn(2+)-binding residues include D277, D337, and E339. R341 is an active-site residue.

It belongs to the peptidase M17 family. The cofactor is Mn(2+).

The protein localises to the cytoplasm. It catalyses the reaction Release of an N-terminal amino acid, Xaa-|-Yaa-, in which Xaa is preferably Leu, but may be other amino acids including Pro although not Arg or Lys, and Yaa may be Pro. Amino acid amides and methyl esters are also readily hydrolyzed, but rates on arylamides are exceedingly low.. The catalysed reaction is Release of an N-terminal amino acid, preferentially leucine, but not glutamic or aspartic acids.. Functionally, presumably involved in the processing and regular turnover of intracellular proteins. Catalyzes the removal of unsubstituted N-terminal amino acids from various peptides. The protein is Probable cytosol aminopeptidase of Parasynechococcus marenigrum (strain WH8102).